A 404-amino-acid polypeptide reads, in one-letter code: MHC class I-like protein MILL1 (404 aa).

The first 30 residues, 1 to 30, serve as a signal peptide directing secretion; sequence MMLSRDLRAEAAVRLWIMFLLLEDLLGACA. Residues 59-150 are alpha-1; the sequence is EVAGPHTLRY…VTGQKGQDKG (92 aa). 3 N-linked (GlcNAc...) asparagine glycosylation sites follow: Asn-98, Asn-102, and Asn-165. Residues 151–242 form an alpha-2 region; the sequence is LHILQATLGC…SLRSEPLDTG (92 aa). 2 cysteine pairs are disulfide-bonded: Cys-160–Cys-223 and Cys-262–Cys-322. The region spanning 224 to 338 is the Ig-like C1-type domain; that stretch reads PAQLQRHLAS…GNIEKRAVIV (115 aa). The tract at residues 243-342 is alpha-3; the sequence is SPMVIVTFRN…KRAVIVNTVS (100 aa). The N-linked (GlcNAc...) asparagine glycan is linked to Asn-323. The interval 343–373 is connecting peptide; it reads GEKTRQPSTSGVGGRVKKSLWTTMTTAFMVT. Ser-374 is lipidated: GPI-anchor amidated serine. A propeptide spans 375–404 (removed in mature form); sequence WTRKTGGDSTLLLLWWLLFFSTVLAVLTLV.

Belongs to the MHC class I family. Heterodimer with B2M. As to expression, detected in skin, esophagus, tongue, skin, muscle, uterus, ovary, testis and epididymis.

It localises to the cell membrane. The sequence is that of MHC class I-like protein MILL1 from Rattus norvegicus (Rat).